Here is an 874-residue protein sequence, read N- to C-terminus: Pyruvate, phosphate dikinase (874 aa).

An N-terminal region spans residues 2–340 (AKWVYKFEEG…LYFLQTRNGK (339 aa)). Arg92 is an ATP binding site. Positions 340 to 399 (KRTAPAALQIACDLVDEGMITEEEAVVRIEAKSLDQLLHPTFNPAALKAGEVIGSALPAS) are linker 1. Positions 400–498 (PGAAAGKVYF…TFAEGDYISL (99 aa)) are central. Phosphothreonine; by PDRP1 is present on Thr453. His455 acts as the Tele-phosphohistidine intermediate in catalysis. The linker 2 stretch occupies residues 499 to 533 (DGSTGKIYKGDIETQEASVSGSFERIMVWADKFRT). The interval 534-874 (LKVRTNADTP…AAAQAALNNK (341 aa)) is C-terminal. Residues Arg561, Arg617, Glu745, Gly766, Thr767, Asn768, and Asp769 each coordinate substrate. Glu745 lines the Mg(2+) pocket. Asp769 is a binding site for Mg(2+). Cys831 functions as the Proton donor in the catalytic mechanism.

It belongs to the PEP-utilizing enzyme family. In terms of assembly, homodimer. Mg(2+) serves as cofactor. Post-translationally, phosphorylation of Thr-453 in the dark inactivates the enzyme. Dephosphorylation upon light stimulation reactivates the enzyme.

The catalysed reaction is pyruvate + phosphate + ATP = phosphoenolpyruvate + AMP + diphosphate + H(+). With respect to regulation, activated by light-induced dephosphorylation. Inhibited by dark-induced phosphorylation. Both reactions are catalyzed by PDRP1. Catalyzes the reversible phosphorylation of pyruvate and phosphate. In E.histolytica and C.symbiosus, PPDK functions in the direction of ATP synthesis. The chain is Pyruvate, phosphate dikinase (ppdK) from Clostridium symbiosum (Bacteroides symbiosus).